Here is a 349-residue protein sequence, read N- to C-terminus: ATP phosphoribosyltransferase regulatory subunit (349 aa).

The interval 325–349 (ANGRGRGVRPRRASARGGRAGTRPR) is disordered. Residues 339–349 (ARGGRAGTRPR) are compositionally biased toward low complexity.

It belongs to the class-II aminoacyl-tRNA synthetase family. HisZ subfamily. As to quaternary structure, heteromultimer composed of HisG and HisZ subunits.

The protein localises to the cytoplasm. Its pathway is amino-acid biosynthesis; L-histidine biosynthesis; L-histidine from 5-phospho-alpha-D-ribose 1-diphosphate: step 1/9. Required for the first step of histidine biosynthesis. May allow the feedback regulation of ATP phosphoribosyltransferase activity by histidine. This is ATP phosphoribosyltransferase regulatory subunit from Anaeromyxobacter dehalogenans (strain 2CP-C).